We begin with the raw amino-acid sequence, 207 residues long: MKTKILSLANEEVGEITLNKDIFAVEFIRDDIIKQVIDWQRAKAMFGNHKTKTVSEVSGTTKKPFKQKGTGNARQGSLRSVQMRGGGISHGPKVRSHAIKLPKKVRKLGLIHALSEKYAEEKLLIIDSLKLDKPKTSILVNLLSKFQGQSFFVIDGNKVDINFSLATKNIYNTLIVPQIGANVYDIIRHEYVLLSQEAVSFLEERLR.

The disordered stretch occupies residues 56–75; that stretch reads EVSGTTKKPFKQKGTGNARQ.

The protein belongs to the universal ribosomal protein uL4 family. As to quaternary structure, part of the 50S ribosomal subunit.

Its function is as follows. One of the primary rRNA binding proteins, this protein initially binds near the 5'-end of the 23S rRNA. It is important during the early stages of 50S assembly. It makes multiple contacts with different domains of the 23S rRNA in the assembled 50S subunit and ribosome. In terms of biological role, forms part of the polypeptide exit tunnel. The chain is Large ribosomal subunit protein uL4 from Rickettsia prowazekii (strain Madrid E).